The chain runs to 315 residues: 4-hydroxy-3-methylbut-2-enyl diphosphate reductase (315 aa).

Cys-12 serves as a coordination point for [4Fe-4S] cluster. Residues His-40 and His-74 each contribute to the (2E)-4-hydroxy-3-methylbut-2-enyl diphosphate site. Residues His-40 and His-74 each contribute to the dimethylallyl diphosphate site. Isopentenyl diphosphate contacts are provided by His-40 and His-74. Residue Cys-96 coordinates [4Fe-4S] cluster. His-124 contributes to the (2E)-4-hydroxy-3-methylbut-2-enyl diphosphate binding site. Residue His-124 coordinates dimethylallyl diphosphate. Position 124 (His-124) interacts with isopentenyl diphosphate. The active-site Proton donor is the Glu-126. Thr-167 serves as a coordination point for (2E)-4-hydroxy-3-methylbut-2-enyl diphosphate. Position 213 (Cys-213) interacts with [4Fe-4S] cluster. (2E)-4-hydroxy-3-methylbut-2-enyl diphosphate is bound by residues Ser-241, Ser-242, Asn-243, and Ser-290. Positions 241, 242, 243, and 290 each coordinate dimethylallyl diphosphate. Isopentenyl diphosphate-binding residues include Ser-241, Ser-242, Asn-243, and Ser-290.

Belongs to the IspH family. It depends on [4Fe-4S] cluster as a cofactor.

The enzyme catalyses isopentenyl diphosphate + 2 oxidized [2Fe-2S]-[ferredoxin] + H2O = (2E)-4-hydroxy-3-methylbut-2-enyl diphosphate + 2 reduced [2Fe-2S]-[ferredoxin] + 2 H(+). The catalysed reaction is dimethylallyl diphosphate + 2 oxidized [2Fe-2S]-[ferredoxin] + H2O = (2E)-4-hydroxy-3-methylbut-2-enyl diphosphate + 2 reduced [2Fe-2S]-[ferredoxin] + 2 H(+). The protein operates within isoprenoid biosynthesis; dimethylallyl diphosphate biosynthesis; dimethylallyl diphosphate from (2E)-4-hydroxy-3-methylbutenyl diphosphate: step 1/1. It participates in isoprenoid biosynthesis; isopentenyl diphosphate biosynthesis via DXP pathway; isopentenyl diphosphate from 1-deoxy-D-xylulose 5-phosphate: step 6/6. In terms of biological role, catalyzes the conversion of 1-hydroxy-2-methyl-2-(E)-butenyl 4-diphosphate (HMBPP) into a mixture of isopentenyl diphosphate (IPP) and dimethylallyl diphosphate (DMAPP). Acts in the terminal step of the DOXP/MEP pathway for isoprenoid precursor biosynthesis. The polypeptide is 4-hydroxy-3-methylbut-2-enyl diphosphate reductase (Chloroherpeton thalassium (strain ATCC 35110 / GB-78)).